The following is a 345-amino-acid chain: Protein RecA (345 aa).

An ATP-binding site is contributed by 63–70 (GPESSGKT). Residues 326–345 (VLSDALMTDPEPDADGTPED) are disordered. A compositionally biased stretch (acidic residues) spans 335-345 (PEPDADGTPED).

The protein belongs to the RecA family.

The protein localises to the cytoplasm. Can catalyze the hydrolysis of ATP in the presence of single-stranded DNA, the ATP-dependent uptake of single-stranded DNA by duplex DNA, and the ATP-dependent hybridization of homologous single-stranded DNAs. It interacts with LexA causing its activation and leading to its autocatalytic cleavage. This is Protein RecA from Gluconobacter oxydans (strain 621H) (Gluconobacter suboxydans).